Reading from the N-terminus, the 417-residue chain is L-rhamnose isomerase (417 aa).

Residues His260, Asp292, and Asp294 each coordinate Mn(2+).

Belongs to the rhamnose isomerase family. It depends on Mn(2+) as a cofactor.

The protein resides in the cytoplasm. The enzyme catalyses L-rhamnopyranose = L-rhamnulose. It functions in the pathway carbohydrate degradation; L-rhamnose degradation; glycerone phosphate from L-rhamnose: step 1/3. Catalyzes the interconversion of L-rhamnose and L-rhamnulose. The chain is L-rhamnose isomerase from Mannheimia succiniciproducens (strain KCTC 0769BP / MBEL55E).